The following is a 2636-amino-acid chain: Ankyrin repeat and KH domain-containing protein CBG24701 (2636 aa).

11 ANK repeats span residues 252 to 281, 286 to 317, 361 to 390, 435 to 464, 468 to 500, 505 to 534, 536 to 564, 566 to 595, 598 to 627, 632 to 661, and 665 to 695; these read SRITPLMEAAASSSEMIVELLLDYGMDPNA, NCNTALIYAAATDDRDMVEVILEHEGPHKVDV, NDNSPLIFAAMKGFLDIATVILDYQDKNQQ, NLPSPMMLACAGGFPELVEILLAAGARIDE, HKNTCLIEACDGVSGDQVSVVRMLLNRHADVNA, SGDTPMSLAARHGNIAIMKMLYEKGADLTT, KITPIVEASIETHLECVQFILAHCKTIPQ, QLSRALFAAAEGGCLKIVEELVRAGADLNF, DERTAIMKAARFNHFDIVQYLVYKGASVNF, NDATALSLACTYGNMDIAQFLIRNGADPML, and DGVNCFMEAAKHGSFDLMKLLVEFTKGNMDL. Disordered regions lie at residues 994–1030, 1172–1191, and 1230–1268; these read PIDAHQSNPPPAQQTGPKTTSLTTPQPDESNGATTIE, KSNRDKGSQQLKAAEQKKGK, and NNTQVQQQQGQQQQGQLRRTHSEGDGTERAKARSNVIDK. Residues 1006–1030 are compositionally biased toward polar residues; it reads QQTGPKTTSLTTPQPDESNGATTIE. Residues 1233–1245 are compositionally biased toward low complexity; that stretch reads QVQQQQGQQQQGQ. Residues 1249 to 1260 show a composition bias toward basic and acidic residues; it reads THSEGDGTERAK. ANK repeat units lie at residues 1273 to 1302, 1306 to 1335, 1340 to 1369, 1373 to 1402, 1408 to 1437, 1447 to 1476, 1480 to 1509, 1515 to 1546, 1548 to 1577, and 1581 to 1610; these read TLETPLSIACSNGHREVVELLLKEGANIEH, KGFTPLIIAATYGHAPIVEVLLKNHAAIEA, TKDTALSLACTAGRKDVVEMLLAHGANKEH, SDYTPLSLASSSGFLDIVNLLLTAGSEINS, LGISPLMLAAMNGHKETTKVLLEKGSDINA, YRNTALTLASFQGRFEVVKLLLCYNANVEH, TGLTPLMECASGGYVDVGNLLIENGADPNA, TKDTALTIAAEKGHEKFVQMLLDNDVIYDIRN, KGCSALWLACNGGHLGTAQALVFKGADTDM, and RKMSPMVAAFRKGHIEIIKFLVGHAKQFPN. Residues 1638–1696 are a coiled coil; that stretch reads RNAKKAQAETAEETANRLLQLIDDEKERDINKKQKIKDKKKQKKEAKKKFQAEQEQLSA. The tract at residues 1669–1857 is disordered; it reads KKQKIKDKKK…SSISERQHSW (189 aa). Over residues 1670-1686 the composition is skewed to basic residues; sequence KQKIKDKKKQKKEAKKK. A compositionally biased stretch (pro residues) spans 1698–1708; sequence PSKPEPVVAPE. A compositionally biased stretch (acidic residues) spans 1709 to 1722; that stretch reads PEPEPETEPVEEPA. Over residues 1811-1829 the composition is skewed to basic and acidic residues; that stretch reads DWQKAGKEGKKVRPKREGR. Over residues 1832-1851 the composition is skewed to polar residues; it reads APSSAGSSQAKHRSNTSSIS. A KH domain is found at 1864 to 1929; it reads VKAYEFTVPG…DVVSMAVNII (66 aa). 7 disordered regions span residues 1980 to 2182, 2196 to 2221, 2269 to 2292, 2301 to 2320, 2352 to 2417, 2444 to 2465, and 2539 to 2636; these read SASI…SLPS, FKPTAPAPAPVTSIAPSTSTATSTAS, NSTASSLNTATTKNDTSDWGSNDF, SNQKTSSAPQQPVSSVNSQL, SQSS…TQQQ, MHRQENSSSVPGPSQPSANPYY, and GMMQ…SSRM. Over residues 1994–2008 the composition is skewed to polar residues; the sequence is SQCNRSSKSHGNQAT. A compositionally biased stretch (low complexity) spans 2025-2045; the sequence is TPPTQTQTKQQPTPSPQVQQP. Residues 2057 to 2083 are compositionally biased toward polar residues; sequence SLAQSSVPQATENVTKPTQTPPASVQQ. Composition is skewed to low complexity over residues 2099 to 2119 and 2139 to 2148; these read QVVQPVPPVHQHTPVPQQRPQ and QQHMQQIQQQ. Positions 2167–2179 are enriched in pro residues; the sequence is PGPPVQPQTPPQS. A compositionally biased stretch (low complexity) spans 2269–2280; sequence NSTASSLNTATT. Residues 2281–2292 show a composition bias toward polar residues; it reads KNDTSDWGSNDF. 2 stretches are compositionally biased toward low complexity: residues 2361 to 2373 and 2391 to 2417; these read QHQQQQQRIMQDP and PQQFQQPQFSSQSHPSQSSMMPSTQQQ. Composition is skewed to polar residues over residues 2449–2465, 2565–2574, and 2583–2595; these read NSSSVPGPSQPSANPYY, RSASGSSQNR, and QQPQPFSQLTQAD. Positions 2599-2615 are enriched in low complexity; sequence RLLLQQQQQQRSSQQQQ. A compositionally biased stretch (polar residues) spans 2616–2636; that stretch reads NPTNQGLPQKWSNTWNSSSRM.

The protein belongs to the mask family.

It localises to the cytoplasm. The chain is Ankyrin repeat and KH domain-containing protein CBG24701 from Caenorhabditis briggsae.